Reading from the N-terminus, the 478-residue chain is Proline--tRNA ligase (478 aa).

This sequence belongs to the class-II aminoacyl-tRNA synthetase family. ProS type 3 subfamily. Homodimer.

The protein resides in the cytoplasm. It carries out the reaction tRNA(Pro) + L-proline + ATP = L-prolyl-tRNA(Pro) + AMP + diphosphate. In terms of biological role, catalyzes the attachment of proline to tRNA(Pro) in a two-step reaction: proline is first activated by ATP to form Pro-AMP and then transferred to the acceptor end of tRNA(Pro). The chain is Proline--tRNA ligase from Oceanobacillus iheyensis (strain DSM 14371 / CIP 107618 / JCM 11309 / KCTC 3954 / HTE831).